A 473-amino-acid polypeptide reads, in one-letter code: Proton-coupled folate transporter (473 aa).

The segment covering 1 to 20 (MAAPSDPPTAATPPAPPPPA) has biased composition (pro residues). Positions 1-21 (MAAPSDPPTAATPPAPPPPAR) are disordered. The Cytoplasmic segment spans residues 1 to 29 (MAAPSDPPTAATPPAPPPPARRCLLAPSV). A helical membrane pass occupies residues 30–48 (EPLLFLATLALGLQVPLAT). At 49–90 (QYLWDRLGAERGYVGPNASSPHGCGNGSGAVDPLREEVEALV) the chain is on the extracellular side. N-linked (GlcNAc...) asparagine glycans are attached at residues Asn65 and Asn74. A disulfide bridge links Cys72 with Cys306. The helical transmembrane segment at 91-116 (AHWNLCINLGGFFVGLFSVTLFGPWS) threads the bilayer. A pemetrexed-binding site is contributed by Asn98. Over 117–120 (DSVG) the chain is Cytoplasmic. Residues 121 to 143 (RRPVLVLPAVGMAVQAAVYLLVM) form a helical membrane-spanning segment. The Extracellular portion of the chain corresponds to 144-148 (YLRLH). The chain crosses the membrane as a helical span at residues 149-162 (VAYLLLGRIISGLL). Residues 163–185 (GDYNLILAGCFASVADSSNQRTR) are Cytoplasmic-facing. Residues Asp164 and Glu193 each contribute to the H(+) site. A helical membrane pass occupies residues 186–211 (TFRVAILEACLGVAGMVASVGGGQWR). Glu193 contributes to the pemetrexed binding site. Residues 212-216 (KAEGY) are Extracellular-facing. The chain crosses the membrane as a helical span at residues 217–235 (INPFWLVLAASLAAALYAA). Residues 236–274 (LCLQETVKQRRAAKLLTLQHYKAVYKLYTAPEDLSSRRK) lie on the Cytoplasmic side of the membrane. The chain crosses the membrane as a helical span at residues 275 to 297 (LALYSLAFFLLVTVHFGTKDLYV). His289 provides a ligand contact to H(+). Residues 298 to 310 (LYELGSPLCWASD) are Extracellular-facing. Residues 311–333 (LIGYGSAASYLAYLSSLGGLRLL) form a helical membrane-spanning segment. Tyr323 provides a ligand contact to pemetrexed. Topologically, residues 334-339 (QLCLED) are cytoplasmic. A helical transmembrane segment spans residues 340–359 (TWVAEIGLISNIAGLVVISL). The Extracellular segment spans residues 360 to 363 (ATTT). Residues 364–384 (PLMFTGYGIMFLSMAATPVIR) form a helical membrane-spanning segment. The Cytoplasmic segment spans residues 385–396 (AKLSKLVGETEQ). Residues 397–422 (GALFASVACVEGLCSLVATGVFNSLY) form a helical membrane-spanning segment. Glu407 and Ser411 together coordinate pemetrexed. Topologically, residues 423–430 (PSTLHFMR) are extracellular. Residues 431–449 (GFPFLFGAILLLIPAAIMG) traverse the membrane as a helical segment. Residues 450–473 (WIEIQDSNLQYSHFSDASSSPADG) lie on the Cytoplasmic side of the membrane.

Belongs to the major facilitator superfamily. SLC46A family. Monomer. Widely expressed, including brain, aorta, liver, kidney, spleen, small intestine, pancreas, ovary and testis.

Its subcellular location is the cell membrane. The protein localises to the apical cell membrane. It is found in the basolateral cell membrane. The protein resides in the endosome membrane. It localises to the cytoplasm. It carries out the reaction folate(in) + H(+)(in) = folate(out) + H(+)(out). It catalyses the reaction (6S)-5-methyl-5,6,7,8-tetrahydrofolate(in) + H(+)(in) = (6S)-5-methyl-5,6,7,8-tetrahydrofolate(out) + H(+)(out). The catalysed reaction is methotrexate(in) + H(+)(in) = methotrexate(out) + H(+)(out). The enzyme catalyses pemetrexed(in) + H(+)(in) = pemetrexed(out) + H(+)(out). Proton-coupled folate symporter that mediates folate absorption using an H(+) gradient as a driving force. Involved in the intestinal absorption of folates at the brush-border membrane of the proximal jejunum, and the transport from blood to cerebrospinal fluid across the choroid plexus. Functions at acidic pH via alternate outward- and inward-open conformation states. Protonation of residues in the outward open state primes the protein for transport. Binding of folate promotes breaking of salt bridge network and subsequent closure of the extracellular gate, leading to the inward-open state and release of protons and folate. Also able to transport antifolate drugs, such as methotrexate and pemetrexed. Also acts as a lower-affinity, pH-independent heme carrier protein and constitutes the main importer of heme in the intestine. Imports heme in the retina and retinal pigment epithelium, in neurons of the hippocampus, in hepatocytes and in the renal epithelial cells. In Gallus gallus (Chicken), this protein is Proton-coupled folate transporter.